We begin with the raw amino-acid sequence, 232 residues long: Orotidine 5'-phosphate decarboxylase (232 aa).

Substrate contacts are provided by residues Asp11, Lys33, 60–69, Thr119, Arg180, Gln189, Gly209, and Arg210; that span reads DLKLYDIPNT. Residue Lys62 is the Proton donor of the active site.

This sequence belongs to the OMP decarboxylase family. Type 1 subfamily. As to quaternary structure, homodimer.

The catalysed reaction is orotidine 5'-phosphate + H(+) = UMP + CO2. It participates in pyrimidine metabolism; UMP biosynthesis via de novo pathway; UMP from orotate: step 2/2. Functionally, catalyzes the decarboxylation of orotidine 5'-monophosphate (OMP) to uridine 5'-monophosphate (UMP). The sequence is that of Orotidine 5'-phosphate decarboxylase from Wigglesworthia glossinidia brevipalpis.